The chain runs to 667 residues: MAAETLLSSLLGLLLLGLLLPATLTGGVGSLNLEELSEMRYGIEILPLPVMGGQSQASDVVIVSSKYKQRYECRLPAGAIHFQREREEETPAYQGPGIPELLSPMKDAPCLLKTKDWWTYEFCYGRHIQQYHMEDSEIKGEVLYLGYYQSAFDWDDETAKASKQHRLKRYHSQTYGNGSKCDLNGRPREAEVRFLCDEGAGISGDYIDRVDEPLSCSYVLTIRTPRLCPHPLLRPPPSAAPQAILCHPALQPEEYMAYVQRQADSKQYGDRAIEGRQDPDPPVWSETKPGVVPPKKAGASPAKENSKESDFWKMLHEPEEQPPEKEETQAEEQEPNLEATDPPPTSPDDFQNNVQVKVIRSPADLIRLIEELKGGTRKGKPNTGQEQPGDSATEVPSREPEMKEKGDPEQQNEVEEEEDDEDEDEDEDERQLLGEFEKELEGILLPSDRERLRAEVKAGMERELENIIQETEKELDPDGLKKESERDRAILALTSTLNKLIKRLEEKQSPELMKKHRKRRVVPKKPPPSPQSTEEDPEHRVRVRVTKLRHGGPNQDLTVLEMKRENPQLKQIEGLVKDLLEREGLTAEGKIEIKIVRPGTEGTEEDARWLTDEDTKNLKEIFFNILVQGAEEAQKERQRQKELESNYRRVWGSPGGEGTGDLDEFDF.

A signal peptide spans 1-25; it reads MAAETLLSSLLGLLLLGLLLPATLT. The 123-residue stretch at 108 to 230 folds into the MRH domain; it reads APCLLKTKDW…TIRTPRLCPH (123 aa). Cys-110 and Cys-123 are joined by a disulfide. A mannooligosaccharide derivative contacts are provided by Trp-117, Trp-118, and Gln-130. N-linked (GlcNAc...) asparagine glycosylation occurs at Asn-177. Cystine bridges form between Cys-181–Cys-216 and Cys-196–Cys-228. Residues Asp-182, Arg-188, Glu-212, and Tyr-218 each contribute to the a mannooligosaccharide derivative site. Disordered regions lie at residues 262-450, 506-541, and 636-667; these read QADS…SDRE, EKQS…EHRV, and ERQR…EFDF. 3 stretches are compositionally biased toward basic and acidic residues: residues 263 to 279, 304 to 328, and 396 to 408; these read ADSK…RQDP, ENSK…KEET, and PSRE…KGDP. Positions 410 to 429 are enriched in acidic residues; sequence QQNEVEEEEDDEDEDEDEDE. The segment covering 430-450 has biased composition (basic and acidic residues); it reads RQLLGEFEKELEGILLPSDRE. The span at 514 to 523 shows a compositional bias: basic residues; sequence KKHRKRRVVP. Over residues 636 to 647 the composition is skewed to basic and acidic residues; the sequence is ERQRQKELESNY.

The protein belongs to the OS-9 family. In terms of assembly, component of the HRD1 complex, which comprises at least SYNV1/HRD1, DERL1/2, FAM8A1, HERPUD1/HERP, OS9, SEL1L and UBE2J1. FAM8A1 is stabilized by interaction with SYNV1, which prevents its proteasomal degradation. OS9 and UBE2J1 recruitment to the complex may be mediated by SEL1L. Through this complex, may interact with ERLEC1 and HSPA5. Interacts (via C-terminus) with CPNE6 (via second C2 domain); this interaction occurs in a calcium-dependent manner in vitro. Interacts with CREB3. In terms of processing, intramolecular disulfide bonds.

The protein localises to the endoplasmic reticulum lumen. Functionally, lectin component of the HRD1 complex, which functions in endoplasmic reticulum (ER) quality control and ER-associated degradation (ERAD). Specifically recognizes and binds improperly folded glycoproteins as well as hyperglycosylated proteins, retain them in the ER, and transfers them to the ubiquitination machinery and promote their degradation. Possible targets include TRPV4 as well as hyperglycosylated HSP90B1. The sequence is that of Protein OS-9 (OS9) from Bos taurus (Bovine).